The primary structure comprises 62 residues: Photosystem II reaction center protein Z (62 aa).

The next 2 helical transmembrane spans lie at 8–28 (LVLL…VVLA) and 41–61 (YTGA…NSLV).

It belongs to the PsbZ family. PSII is composed of 1 copy each of membrane proteins PsbA, PsbB, PsbC, PsbD, PsbE, PsbF, PsbH, PsbI, PsbJ, PsbK, PsbL, PsbM, PsbT, PsbX, PsbY, PsbZ, Psb30/Ycf12, at least 3 peripheral proteins of the oxygen-evolving complex and a large number of cofactors. It forms dimeric complexes.

The protein resides in the plastid. It is found in the chloroplast thylakoid membrane. May control the interaction of photosystem II (PSII) cores with the light-harvesting antenna, regulates electron flow through the 2 photosystem reaction centers. PSII is a light-driven water plastoquinone oxidoreductase, using light energy to abstract electrons from H(2)O, generating a proton gradient subsequently used for ATP formation. This Pyropia yezoensis (Susabi-nori) protein is Photosystem II reaction center protein Z.